A 373-amino-acid chain; its full sequence is Bifunctional enzyme IspD/IspF (373 aa).

The segment at 1–212 (MPDITLILLG…PCIEAPSGKT (212 aa)) is 2-C-methyl-D-erythritol 4-phosphate cytidylyltransferase. The interval 213 to 373 (LTGFGLDIHP…NLTYYNWKQK (161 aa)) is 2-C-methyl-D-erythritol 2,4-cyclodiphosphate synthase. The a divalent metal cation site is built by D219 and H221. 4-CDP-2-C-methyl-D-erythritol 2-phosphate contacts are provided by residues 219–221 (DIH) and 245–246 (HS). H253 contacts a divalent metal cation. 4-CDP-2-C-methyl-D-erythritol 2-phosphate-binding positions include 267 to 269 (DIG), 272 to 276 (YPDTD), 343 to 346 (TTAE), F350, and R353.

The protein in the N-terminal section; belongs to the IspD/TarI cytidylyltransferase family. IspD subfamily. It in the C-terminal section; belongs to the IspF family. A divalent metal cation serves as cofactor.

It carries out the reaction 2-C-methyl-D-erythritol 4-phosphate + CTP + H(+) = 4-CDP-2-C-methyl-D-erythritol + diphosphate. It catalyses the reaction 4-CDP-2-C-methyl-D-erythritol 2-phosphate = 2-C-methyl-D-erythritol 2,4-cyclic diphosphate + CMP. Its pathway is isoprenoid biosynthesis; isopentenyl diphosphate biosynthesis via DXP pathway; isopentenyl diphosphate from 1-deoxy-D-xylulose 5-phosphate: step 2/6. It participates in isoprenoid biosynthesis; isopentenyl diphosphate biosynthesis via DXP pathway; isopentenyl diphosphate from 1-deoxy-D-xylulose 5-phosphate: step 4/6. Its function is as follows. Bifunctional enzyme that catalyzes the formation of 4-diphosphocytidyl-2-C-methyl-D-erythritol from CTP and 2-C-methyl-D-erythritol 4-phosphate (MEP) (IspD), and catalyzes the conversion of 4-diphosphocytidyl-2-C-methyl-D-erythritol 2-phosphate (CDP-ME2P) to 2-C-methyl-D-erythritol 2,4-cyclodiphosphate (ME-CPP) with a corresponding release of cytidine 5-monophosphate (CMP) (IspF). The chain is Bifunctional enzyme IspD/IspF from Sulfurovum sp. (strain NBC37-1).